Consider the following 279-residue polypeptide: Biotin synthase (279 aa).

Residues 2–232 form the Radical SAM core domain; the sequence is VRNSRLDICS…NVTIKIAAGR (231 aa). Residues C20, C24, and C27 each coordinate [4Fe-4S] cluster. The [2Fe-2S] cluster site is built by C96, C156, and K227.

It belongs to the radical SAM superfamily. Biotin synthase family. As to quaternary structure, homodimer. It depends on [4Fe-4S] cluster as a cofactor. Requires [2Fe-2S] cluster as cofactor.

It catalyses the reaction (4R,5S)-dethiobiotin + (sulfur carrier)-SH + 2 reduced [2Fe-2S]-[ferredoxin] + 2 S-adenosyl-L-methionine = (sulfur carrier)-H + biotin + 2 5'-deoxyadenosine + 2 L-methionine + 2 oxidized [2Fe-2S]-[ferredoxin]. It functions in the pathway cofactor biosynthesis; biotin biosynthesis; biotin from 7,8-diaminononanoate: step 2/2. Its function is as follows. Catalyzes the conversion of dethiobiotin (DTB) to biotin by the insertion of a sulfur atom into dethiobiotin via a radical-based mechanism. This Thermotoga neapolitana (strain ATCC 49049 / DSM 4359 / NBRC 107923 / NS-E) protein is Biotin synthase.